The primary structure comprises 36 residues: Photosystem I reaction center subunit VIII (36 aa).

Residues 9-29 (ILVPLVGLVFPAIAMASLFLY) form a helical membrane-spanning segment.

This sequence belongs to the PsaI family.

It is found in the plastid. It localises to the chloroplast thylakoid membrane. Functionally, may help in the organization of the PsaL subunit. The protein is Photosystem I reaction center subunit VIII of Oltmannsiellopsis viridis (Marine flagellate).